We begin with the raw amino-acid sequence, 190 residues long: Cypemycin cysteine dehydrogenase (decarboxylating) (190 aa).

The protein belongs to the HFCD (homooligomeric flavin containing Cys decarboxylase) superfamily.

It carries out the reaction [cypemycin](1-18)-L-Cys-L-Leu-L-Val-L-Cys + A = C(3,19),S(21)-[cypemycin](1-18)-L-Ala-L-Leu-N-thioethenyl-L-valinamide + hydrogen sulfide + AH2 + CO2. Its function is as follows. Involved in the biosynthesis of the lanaridin cypemycin. In Streptomyces sp, this protein is Cypemycin cysteine dehydrogenase (decarboxylating).